A 526-amino-acid polypeptide reads, in one-letter code: Bifunctional purine biosynthesis protein PurH (526 aa).

In terms of domain architecture, MGS-like spans 1–147; the sequence is MSVIKRALIS…KNWKHVAIVT (147 aa).

This sequence belongs to the PurH family.

It catalyses the reaction (6R)-10-formyltetrahydrofolate + 5-amino-1-(5-phospho-beta-D-ribosyl)imidazole-4-carboxamide = 5-formamido-1-(5-phospho-D-ribosyl)imidazole-4-carboxamide + (6S)-5,6,7,8-tetrahydrofolate. The catalysed reaction is IMP + H2O = 5-formamido-1-(5-phospho-D-ribosyl)imidazole-4-carboxamide. Its pathway is purine metabolism; IMP biosynthesis via de novo pathway; 5-formamido-1-(5-phospho-D-ribosyl)imidazole-4-carboxamide from 5-amino-1-(5-phospho-D-ribosyl)imidazole-4-carboxamide (10-formyl THF route): step 1/1. It functions in the pathway purine metabolism; IMP biosynthesis via de novo pathway; IMP from 5-formamido-1-(5-phospho-D-ribosyl)imidazole-4-carboxamide: step 1/1. This Neisseria gonorrhoeae (strain ATCC 700825 / FA 1090) protein is Bifunctional purine biosynthesis protein PurH.